A 72-amino-acid chain; its full sequence is Disintegrin batroxostatin (72 aa).

One can recognise a Disintegrin domain in the interval 1-72; that stretch reads EAGEECDCGA…SADCPRNRFY (72 aa). 6 disulfide bridges follow: Cys-6-Cys-21, Cys-8-Cys-16, Cys-15-Cys-38, Cys-29-Cys-35, Cys-34-Cys-59, and Cys-47-Cys-66. The Cell attachment site motif lies at 51-53; that stretch reads RGD. The segment at 52 to 72 is disordered; that stretch reads GDNPDDRCTGQSADCPRNRFY.

It belongs to the venom metalloproteinase (M12B) family. P-II subfamily. P-IIa sub-subfamily. Monomer. As to expression, expressed by the venom gland.

The protein resides in the secreted. Functionally, inhibits fibrinogen interaction with platelets. Acts by binding to the glycoprotein IIb-IIIa receptor (ITGA2B/ITGB3) on the platelet surface and inhibits aggregation induced by ADP, thrombin, platelet-activating factor and collagen. Also inhibits T24 and SK-Mel-28 cell adhesion to fibronectin with IC(50) of 4.4 uM and 33 nM, respectively. The protein is Disintegrin batroxostatin of Bothrops atrox (Barba amarilla).